We begin with the raw amino-acid sequence, 597 residues long: UvrABC system protein C (597 aa).

In terms of domain architecture, GIY-YIG spans K14 to L91.

The protein belongs to the UvrC family. Interacts with UvrB in an incision complex.

Its subcellular location is the cytoplasm. The UvrABC repair system catalyzes the recognition and processing of DNA lesions. UvrC both incises the 5' and 3' sides of the lesion. The N-terminal half is responsible for the 3' incision and the C-terminal half is responsible for the 5' incision. This Mycoplasma genitalium (strain ATCC 33530 / DSM 19775 / NCTC 10195 / G37) (Mycoplasmoides genitalium) protein is UvrABC system protein C.